The following is an 88-amino-acid chain: Small ribosomal subunit protein bS20 (88 aa).

It belongs to the bacterial ribosomal protein bS20 family.

In terms of biological role, binds directly to 16S ribosomal RNA. The chain is Small ribosomal subunit protein bS20 from Methylorubrum extorquens (strain CM4 / NCIMB 13688) (Methylobacterium extorquens).